A 681-amino-acid chain; its full sequence is Minichromosome maintenance domain-containing protein 2 (681 aa).

Serine 292 is subject to Phosphoserine. One can recognise an MCM domain in the interval lysine 533–serine 621.

In terms of biological role, plays an important role in meiotic recombination and associated DNA double-strand break repair. The polypeptide is Minichromosome maintenance domain-containing protein 2 (Mcmdc2) (Rattus norvegicus (Rat)).